We begin with the raw amino-acid sequence, 339 residues long: DNA-directed RNA polymerase subunit alpha (339 aa).

Positions 1-233 are alpha N-terminal domain (alpha-NTD); sequence MVREEIAVAT…DLFIPFLHAE (233 aa). An alpha C-terminal domain (alpha-CTD) region spans residues 267-339; it reads KKMALKSIFI…FGFDLPKNGK (73 aa).

The protein belongs to the RNA polymerase alpha chain family. As to quaternary structure, in plastids the minimal PEP RNA polymerase catalytic core is composed of four subunits: alpha, beta, beta', and beta''. When a (nuclear-encoded) sigma factor is associated with the core the holoenzyme is formed, which can initiate transcription.

It is found in the plastid. Its subcellular location is the chloroplast. It carries out the reaction RNA(n) + a ribonucleoside 5'-triphosphate = RNA(n+1) + diphosphate. Its function is as follows. DNA-dependent RNA polymerase catalyzes the transcription of DNA into RNA using the four ribonucleoside triphosphates as substrates. The sequence is that of DNA-directed RNA polymerase subunit alpha from Piper cenocladum (Ant piper).